The sequence spans 171 residues: Secretion monitor (171 aa).

The first 36 residues, 1–36 (MIGILNRWRQFGRRYFWPHLLLGMVAASLGLPTSLN), serve as a signal peptide directing secretion.

This sequence belongs to the SecM family.

The protein resides in the cytoplasm. It is found in the cytosol. The protein localises to the periplasm. In terms of biological role, regulates secA expression by translational coupling of the secM secA operon. Translational pausing at a specific Pro residue 5 residues before the end of the protein may allow disruption of a mRNA repressor helix that normally suppresses secA translation initiation. The chain is Secretion monitor from Pectobacterium carotovorum subsp. carotovorum (strain PC1).